Consider the following 328-residue polypeptide: Malate dehydrogenase (328 aa).

Residue 12 to 18 (GAAGQIG) coordinates NAD(+). Substrate-binding residues include Arg95 and Arg101. NAD(+)-binding positions include Asn108, Gln115, and 132–134 (VGN). 2 residues coordinate substrate: Asn134 and Arg165. His190 (proton acceptor) is an active-site residue.

The protein belongs to the LDH/MDH superfamily. MDH type 2 family.

The catalysed reaction is (S)-malate + NAD(+) = oxaloacetate + NADH + H(+). In terms of biological role, catalyzes the reversible oxidation of malate to oxaloacetate. The protein is Malate dehydrogenase of Delftia acidovorans (strain DSM 14801 / SPH-1).